A 904-amino-acid chain; its full sequence is HTH-type transcriptional regulator MalT (904 aa).

39-46 (CPAGYGKT) is a binding site for ATP. Residues 832 to 897 (ELIRTSPLTQ…EAVQQAQQLL (66 aa)) enclose the HTH luxR-type domain. Residues 856 to 875 (NDQIAGELAVAATTIKTHIR) constitute a DNA-binding region (H-T-H motif).

The protein belongs to the MalT family. Monomer in solution. Oligomerizes to an active state in the presence of the positive effectors ATP and maltotriose.

With respect to regulation, activated by ATP and maltotriose, which are both required for DNA binding. Its function is as follows. Positively regulates the transcription of the maltose regulon whose gene products are responsible for uptake and catabolism of malto-oligosaccharides. Specifically binds to the promoter region of its target genes, recognizing a short DNA motif called the MalT box. This chain is HTH-type transcriptional regulator MalT, found in Serratia proteamaculans (strain 568).